Reading from the N-terminus, the 63-residue chain is Large ribosomal subunit protein uL29 (63 aa).

This sequence belongs to the universal ribosomal protein uL29 family.

The protein is Large ribosomal subunit protein uL29 of Pseudomonas aeruginosa (strain UCBPP-PA14).